A 308-amino-acid chain; its full sequence is 4-hydroxy-tetrahydrodipicolinate synthase (308 aa).

Residue threonine 56 participates in pyruvate binding. Tyrosine 144 acts as the Proton donor/acceptor in catalysis. Catalysis depends on lysine 172, which acts as the Schiff-base intermediate with substrate. Residue valine 212 coordinates pyruvate.

Belongs to the DapA family. Homotetramer; dimer of dimers.

The protein resides in the cytoplasm. The enzyme catalyses L-aspartate 4-semialdehyde + pyruvate = (2S,4S)-4-hydroxy-2,3,4,5-tetrahydrodipicolinate + H2O + H(+). The protein operates within amino-acid biosynthesis; L-lysine biosynthesis via DAP pathway; (S)-tetrahydrodipicolinate from L-aspartate: step 3/4. Catalyzes the condensation of (S)-aspartate-beta-semialdehyde [(S)-ASA] and pyruvate to 4-hydroxy-tetrahydrodipicolinate (HTPA). In Kineococcus radiotolerans (strain ATCC BAA-149 / DSM 14245 / SRS30216), this protein is 4-hydroxy-tetrahydrodipicolinate synthase.